Consider the following 370-residue polypeptide: tRNA-specific 2-thiouridylase MnmA (370 aa).

ATP contacts are provided by residues 12–19 (GMSGGVDS) and L38. The active-site Nucleophile is the C105. A disulfide bridge connects residues C105 and C204. G129 is a binding site for ATP. An interaction with tRNA region spans residues 153–155 (KDQ). C204 serves as the catalytic Cysteine persulfide intermediate. The tract at residues 310–311 (RY) is interaction with tRNA.

Belongs to the MnmA/TRMU family.

It is found in the cytoplasm. It catalyses the reaction S-sulfanyl-L-cysteinyl-[protein] + uridine(34) in tRNA + AH2 + ATP = 2-thiouridine(34) in tRNA + L-cysteinyl-[protein] + A + AMP + diphosphate + H(+). Its function is as follows. Catalyzes the 2-thiolation of uridine at the wobble position (U34) of tRNA, leading to the formation of s(2)U34. In Desulfitobacterium hafniense (strain Y51), this protein is tRNA-specific 2-thiouridylase MnmA.